Here is a 234-residue protein sequence, read N- to C-terminus: 2-C-methyl-D-erythritol 4-phosphate cytidylyltransferase (234 aa).

This sequence belongs to the IspD/TarI cytidylyltransferase family. IspD subfamily.

The catalysed reaction is 2-C-methyl-D-erythritol 4-phosphate + CTP + H(+) = 4-CDP-2-C-methyl-D-erythritol + diphosphate. The protein operates within isoprenoid biosynthesis; isopentenyl diphosphate biosynthesis via DXP pathway; isopentenyl diphosphate from 1-deoxy-D-xylulose 5-phosphate: step 2/6. Its function is as follows. Catalyzes the formation of 4-diphosphocytidyl-2-C-methyl-D-erythritol from CTP and 2-C-methyl-D-erythritol 4-phosphate (MEP). This is 2-C-methyl-D-erythritol 4-phosphate cytidylyltransferase from Photobacterium profundum (strain SS9).